The chain runs to 430 residues: Glutamate-1-semialdehyde 2,1-aminomutase (430 aa).

Lys269 carries the post-translational modification N6-(pyridoxal phosphate)lysine.

This sequence belongs to the class-III pyridoxal-phosphate-dependent aminotransferase family. HemL subfamily. As to quaternary structure, homodimer. Pyridoxal 5'-phosphate serves as cofactor.

It is found in the cytoplasm. It carries out the reaction (S)-4-amino-5-oxopentanoate = 5-aminolevulinate. It functions in the pathway porphyrin-containing compound metabolism; protoporphyrin-IX biosynthesis; 5-aminolevulinate from L-glutamyl-tRNA(Glu): step 2/2. The protein is Glutamate-1-semialdehyde 2,1-aminomutase of Desulfitobacterium hafniense (strain Y51).